We begin with the raw amino-acid sequence, 404 residues long: uncharacterized protein (404 aa).

Helical transmembrane passes span 37 to 57 (LLILSVIAFFWGLLGVVFVQF), 92 to 112 (IYNVIFWLSQILINIPLFVLG), 122 to 142 (LLTLYFVVVSNVFGFAFSYIP), 188 to 208 (MFYALIWGFLQAVFYSVILII), 230 to 250 (IGGILFIVNTLSFLIGYTIGT), and 272 to 292 (AFFLSPNLVFTIFMNIILGIF).

The protein resides in the cell membrane. This is an uncharacterized protein from Mycoplasma pneumoniae (strain ATCC 29342 / M129 / Subtype 1) (Mycoplasmoides pneumoniae).